Here is a 447-residue protein sequence, read N- to C-terminus: Argininosuccinate lyase (447 aa).

The protein belongs to the lyase 1 family. Argininosuccinate lyase subfamily.

The protein resides in the cytoplasm. The enzyme catalyses 2-(N(omega)-L-arginino)succinate = fumarate + L-arginine. The protein operates within amino-acid biosynthesis; L-arginine biosynthesis; L-arginine from L-ornithine and carbamoyl phosphate: step 3/3. In Sulfolobus acidocaldarius (strain ATCC 33909 / DSM 639 / JCM 8929 / NBRC 15157 / NCIMB 11770), this protein is Argininosuccinate lyase.